We begin with the raw amino-acid sequence, 165 residues long: Crossover junction endodeoxyribonuclease RuvC (165 aa).

Residues D7, E67, and D140 contribute to the active site. The Mg(2+) site is built by D7, E67, and D140.

It belongs to the RuvC family. In terms of assembly, homodimer which binds Holliday junction (HJ) DNA. The HJ becomes 2-fold symmetrical on binding to RuvC with unstacked arms; it has a different conformation from HJ DNA in complex with RuvA. In the full resolvosome a probable DNA-RuvA(4)-RuvB(12)-RuvC(2) complex forms which resolves the HJ. The cofactor is Mg(2+).

Its subcellular location is the cytoplasm. It catalyses the reaction Endonucleolytic cleavage at a junction such as a reciprocal single-stranded crossover between two homologous DNA duplexes (Holliday junction).. In terms of biological role, the RuvA-RuvB-RuvC complex processes Holliday junction (HJ) DNA during genetic recombination and DNA repair. Endonuclease that resolves HJ intermediates. Cleaves cruciform DNA by making single-stranded nicks across the HJ at symmetrical positions within the homologous arms, yielding a 5'-phosphate and a 3'-hydroxyl group; requires a central core of homology in the junction. The consensus cleavage sequence is 5'-(A/T)TT(C/G)-3'. Cleavage occurs on the 3'-side of the TT dinucleotide at the point of strand exchange. HJ branch migration catalyzed by RuvA-RuvB allows RuvC to scan DNA until it finds its consensus sequence, where it cleaves and resolves the cruciform DNA. This is Crossover junction endodeoxyribonuclease RuvC from Caldanaerobacter subterraneus subsp. tengcongensis (strain DSM 15242 / JCM 11007 / NBRC 100824 / MB4) (Thermoanaerobacter tengcongensis).